The following is a 179-amino-acid chain: Large ribosomal subunit protein uL5 (179 aa).

Belongs to the universal ribosomal protein uL5 family. Part of the 50S ribosomal subunit; part of the 5S rRNA/L5/L18/L25 subcomplex. Contacts the 5S rRNA and the P site tRNA. Forms a bridge to the 30S subunit in the 70S ribosome.

In terms of biological role, this is one of the proteins that bind and probably mediate the attachment of the 5S RNA into the large ribosomal subunit, where it forms part of the central protuberance. In the 70S ribosome it contacts protein S13 of the 30S subunit (bridge B1b), connecting the 2 subunits; this bridge is implicated in subunit movement. Contacts the P site tRNA; the 5S rRNA and some of its associated proteins might help stabilize positioning of ribosome-bound tRNAs. The sequence is that of Large ribosomal subunit protein uL5 from Maridesulfovibrio salexigens (strain ATCC 14822 / DSM 2638 / NCIMB 8403 / VKM B-1763) (Desulfovibrio salexigens).